The following is a 350-amino-acid chain: Phenylalanine--tRNA ligase alpha subunit (350 aa).

Position 262 (Glu262) interacts with Mg(2+).

It belongs to the class-II aminoacyl-tRNA synthetase family. Phe-tRNA synthetase alpha subunit type 1 subfamily. As to quaternary structure, tetramer of two alpha and two beta subunits. The cofactor is Mg(2+).

The protein resides in the cytoplasm. It catalyses the reaction tRNA(Phe) + L-phenylalanine + ATP = L-phenylalanyl-tRNA(Phe) + AMP + diphosphate + H(+). The polypeptide is Phenylalanine--tRNA ligase alpha subunit (Thermus thermophilus (strain ATCC BAA-163 / DSM 7039 / HB27)).